The sequence spans 204 residues: FMN-dependent NADH:quinone oxidoreductase (204 aa).

FMN contacts are provided by residues S9 and 15–17; that span reads SAS.

Belongs to the azoreductase type 1 family. Homodimer. Requires FMN as cofactor.

It catalyses the reaction 2 a quinone + NADH + H(+) = 2 a 1,4-benzosemiquinone + NAD(+). It carries out the reaction N,N-dimethyl-1,4-phenylenediamine + anthranilate + 2 NAD(+) = 2-(4-dimethylaminophenyl)diazenylbenzoate + 2 NADH + 2 H(+). Its function is as follows. Quinone reductase that provides resistance to thiol-specific stress caused by electrophilic quinones. Also exhibits azoreductase activity. Catalyzes the reductive cleavage of the azo bond in aromatic azo compounds to the corresponding amines. The protein is FMN-dependent NADH:quinone oxidoreductase of Xanthomonas campestris pv. campestris (strain ATCC 33913 / DSM 3586 / NCPPB 528 / LMG 568 / P 25).